Consider the following 225-residue polypeptide: Deoxyribose-phosphate aldolase (225 aa).

The active-site Proton donor/acceptor is Asp-94. Catalysis depends on Lys-158, which acts as the Schiff-base intermediate with acetaldehyde. The active-site Proton donor/acceptor is Lys-187.

It belongs to the DeoC/FbaB aldolase family. DeoC type 1 subfamily.

The protein resides in the cytoplasm. The catalysed reaction is 2-deoxy-D-ribose 5-phosphate = D-glyceraldehyde 3-phosphate + acetaldehyde. It participates in carbohydrate degradation; 2-deoxy-D-ribose 1-phosphate degradation; D-glyceraldehyde 3-phosphate and acetaldehyde from 2-deoxy-alpha-D-ribose 1-phosphate: step 2/2. Catalyzes a reversible aldol reaction between acetaldehyde and D-glyceraldehyde 3-phosphate to generate 2-deoxy-D-ribose 5-phosphate. This is Deoxyribose-phosphate aldolase from Thermococcus gammatolerans (strain DSM 15229 / JCM 11827 / EJ3).